Consider the following 203-residue polypeptide: Holliday junction branch migration complex subunit RuvA (203 aa).

A domain I region spans residues 1 to 63; it reads MIFSVRGEVL…EDSMTLYGFS (63 aa). Residues 64-141 form a domain II region; the sequence is DAENRDLFLA…GPVGASGLTV (78 aa). Positions 141-145 are flexible linker; that stretch reads VGTAA. Residues 146 to 203 are domain III; that stretch reads DGNAVRGSVVEALVGLGFAAKQAEEATDQVLDGELGKDGAVATSSALRAALSLLGKTR.

This sequence belongs to the RuvA family. In terms of assembly, homotetramer. Forms an RuvA(8)-RuvB(12)-Holliday junction (HJ) complex. HJ DNA is sandwiched between 2 RuvA tetramers; dsDNA enters through RuvA and exits via RuvB. An RuvB hexamer assembles on each DNA strand where it exits the tetramer. Each RuvB hexamer is contacted by two RuvA subunits (via domain III) on 2 adjacent RuvB subunits; this complex drives branch migration. In the full resolvosome a probable DNA-RuvA(4)-RuvB(12)-RuvC(2) complex forms which resolves the HJ.

The protein resides in the cytoplasm. Its function is as follows. The RuvA-RuvB-RuvC complex processes Holliday junction (HJ) DNA during genetic recombination and DNA repair, while the RuvA-RuvB complex plays an important role in the rescue of blocked DNA replication forks via replication fork reversal (RFR). RuvA specifically binds to HJ cruciform DNA, conferring on it an open structure. The RuvB hexamer acts as an ATP-dependent pump, pulling dsDNA into and through the RuvAB complex. HJ branch migration allows RuvC to scan DNA until it finds its consensus sequence, where it cleaves and resolves the cruciform DNA. The sequence is that of Holliday junction branch migration complex subunit RuvA from Mycobacterium leprae (strain Br4923).